The primary structure comprises 511 residues: Glucose-1-phosphate adenylyltransferase large subunit 1, chloroplastic/amyloplastic (511 aa).

A chloroplast-targeting transit peptide spans 1 to 58 (MAAMDLRVAAPASVAAAARCGTSLARPWPARAVGGGGGGGGRGRRLSVRTSVATTEAA).

Belongs to the bacterial/plant glucose-1-phosphate adenylyltransferase family. In terms of assembly, heterotetramer composed of two small and two large subunits. Expressed in leaves and stems.

It is found in the plastid. Its subcellular location is the chloroplast. The protein resides in the amyloplast. The catalysed reaction is alpha-D-glucose 1-phosphate + ATP + H(+) = ADP-alpha-D-glucose + diphosphate. The protein operates within glycan biosynthesis; starch biosynthesis. With respect to regulation, activated by 3'phosphoglycerate, inhibited by orthophosphate. Allosteric regulation. Functionally, involved in synthesis of starch. Catalyzes the synthesis of ADP-glucose, a molecule that serves as an activated glycosyl donor for alpha-1,4-glucan synthesis. Essential for starch synthesis in leaf chloroplasts and endosperm amyloplasts. The sequence is that of Glucose-1-phosphate adenylyltransferase large subunit 1, chloroplastic/amyloplastic from Oryza sativa subsp. japonica (Rice).